The sequence spans 469 residues: Phosphoenolpyruvate carboxylase (469 aa).

Belongs to the PEPCase type 2 family. In terms of assembly, homotetramer. Requires Mg(2+) as cofactor.

It carries out the reaction oxaloacetate + phosphate = phosphoenolpyruvate + hydrogencarbonate. In terms of biological role, catalyzes the irreversible beta-carboxylation of phosphoenolpyruvate (PEP) to form oxaloacetate (OAA), a four-carbon dicarboxylic acid source for the tricarboxylic acid cycle. The sequence is that of Phosphoenolpyruvate carboxylase from Pyrococcus abyssi (strain GE5 / Orsay).